Reading from the N-terminus, the 276-residue chain is Shikimate dehydrogenase (NADP(+)) (276 aa).

Residues 18-20 (SRS) and Thr-65 each bind shikimate. Lys-69 acts as the Proton acceptor in catalysis. Positions 90 and 106 each coordinate shikimate. Residues 132–136 (GAGGA) and Ile-221 contribute to the NADP(+) site. Tyr-223 is a shikimate binding site. Gly-244 lines the NADP(+) pocket.

The protein belongs to the shikimate dehydrogenase family. As to quaternary structure, homodimer.

The enzyme catalyses shikimate + NADP(+) = 3-dehydroshikimate + NADPH + H(+). The protein operates within metabolic intermediate biosynthesis; chorismate biosynthesis; chorismate from D-erythrose 4-phosphate and phosphoenolpyruvate: step 4/7. In terms of biological role, involved in the biosynthesis of the chorismate, which leads to the biosynthesis of aromatic amino acids. Catalyzes the reversible NADPH linked reduction of 3-dehydroshikimate (DHSA) to yield shikimate (SA). The sequence is that of Shikimate dehydrogenase (NADP(+)) from Paramagnetospirillum magneticum (strain ATCC 700264 / AMB-1) (Magnetospirillum magneticum).